We begin with the raw amino-acid sequence, 777 residues long: Biotin sulfoxide reductase (777 aa).

Mo-bis(molybdopterin guanine dinucleotide) is bound at residue Ser148.

Belongs to the prokaryotic molybdopterin-containing oxidoreductase family. The cofactor is Mo-bis(molybdopterin guanine dinucleotide).

It catalyses the reaction [thioredoxin]-disulfide + L-methionine + H2O = L-methionine (S)-S-oxide + [thioredoxin]-dithiol. This enzyme may serve as a scavenger, allowing the cell to utilize biotin sulfoxide as a biotin source. It reduces a spontaneous oxidation product of biotin, D-biotin D-sulfoxide (BSO or BDS), back to biotin. Also exhibits methionine-(S)-sulfoxide (Met-S-SO) reductase activity, acting specifically on the (S) enantiomer in the free, but not the protein-bound form. It thus plays a role in assimilation of oxidized methionines. This Escherichia coli (strain K12) protein is Biotin sulfoxide reductase (bisC).